Reading from the N-terminus, the 92-residue chain is Small ribosomal subunit protein uS19 (92 aa).

Belongs to the universal ribosomal protein uS19 family.

Protein S19 forms a complex with S13 that binds strongly to the 16S ribosomal RNA. The protein is Small ribosomal subunit protein uS19 (rpsS) of Geobacillus stearothermophilus (Bacillus stearothermophilus).